The sequence spans 578 residues: Multidrug resistance-like ATP-binding protein MdlB (578 aa).

The 284-residue stretch at 25-308 folds into the ABC transmembrane type-1 domain; the sequence is LILGFTLLLF…ITSQQSIFQQ (284 aa). 6 consecutive transmembrane segments (helical) span residues 26–46, 59–79, 143–163, 166–186, 196–216, and 260–280; these read ILGF…PILI, VNYS…AAIL, SLFQ…ILEW, ACIA…YQYF, VYIA…DVIQ, and LILC…FEIG. One can recognise an ABC transporter domain in the interval 339–573; the sequence is IKVKNLYFSY…KSYYKNMYYS (235 aa). Position 373-380 (373-380) interacts with ATP; that stretch reads GRTGSGKS.

This sequence belongs to the ABC transporter superfamily. Drug exporter-2 (TC 3.A.1.117) family.

The protein localises to the cell membrane. It carries out the reaction ATP + H2O + xenobioticSide 1 = ADP + phosphate + xenobioticSide 2.. The protein is Multidrug resistance-like ATP-binding protein MdlB (mdlB) of Buchnera aphidicola subsp. Baizongia pistaciae (strain Bp).